We begin with the raw amino-acid sequence, 409 residues long: Tyrosine--tRNA ligase (409 aa).

The short motif at proline 54–histidine 63 is the 'HIGH' region element. The short motif at lysine 238–serine 242 is the 'KMSKS' region element. An ATP-binding site is contributed by lysine 241. An S4 RNA-binding domain is found at glutamine 347–leucine 407.

Belongs to the class-I aminoacyl-tRNA synthetase family. TyrS type 2 subfamily. As to quaternary structure, homodimer.

Its subcellular location is the cytoplasm. The enzyme catalyses tRNA(Tyr) + L-tyrosine + ATP = L-tyrosyl-tRNA(Tyr) + AMP + diphosphate + H(+). Functionally, catalyzes the attachment of tyrosine to tRNA(Tyr) in a two-step reaction: tyrosine is first activated by ATP to form Tyr-AMP and then transferred to the acceptor end of tRNA(Tyr). This Bordetella pertussis (strain Tohama I / ATCC BAA-589 / NCTC 13251) protein is Tyrosine--tRNA ligase.